A 128-amino-acid chain; its full sequence is 2-iminobutanoate/2-iminopropanoate deaminase (128 aa).

Arginine 105 lines the substrate pocket.

Belongs to the RutC family. In terms of assembly, homotrimer.

The protein resides in the cytoplasm. It carries out the reaction 2-iminobutanoate + H2O = 2-oxobutanoate + NH4(+). The catalysed reaction is 2-iminopropanoate + H2O = pyruvate + NH4(+). It participates in amino-acid biosynthesis; L-isoleucine biosynthesis; 2-oxobutanoate from L-threonine. Accelerates the release of ammonia from reactive enamine/imine intermediates of the PLP-dependent threonine dehydratase (IlvA) in the low water environment of the cell. It catalyzes the deamination of enamine/imine intermediates to yield 2-ketobutyrate and ammonia. It is required for the detoxification of reactive intermediates of IlvA due to their highly nucleophilic abilities and to avoid they are captured by anthranilate phosphoribosyltransferase (TrpD) to generate PRA, an intermediate in the alternative pyrimidine biosynthetic (APB) pathway. Also required for full activity of IlvE which is involved in the isoleucine biosynthesis. RidA also accelerates the release of pyruvate produced by IlvA from L-serine. The chain is 2-iminobutanoate/2-iminopropanoate deaminase from Salmonella typhimurium (strain LT2 / SGSC1412 / ATCC 700720).